A 2098-amino-acid polypeptide reads, in one-letter code: Unconventional myosin heavy chain 6 (2098 aa).

The 671-residue stretch at 62-732 (QGVEDMCQLG…HDLVLEQEYY (671 aa)) folds into the Myosin motor domain. 155 to 162 (GESGAGKT) lines the ATP pocket. Actin-binding stretches follow at residues 609–631 (LEQL…KPNE) and 711–725 (QLGK…KHDL). 3 IQ domains span residues 735-757 (LKDK…DFEK), 758-787 (QRQA…GFSR), and 804-833 (LRKT…RGEK). The interval 860–898 (FLPSDGKDSGNENDSADSSRRGSYSRLHTSPVMPPANIP) is disordered. In terms of domain architecture, MyTH4 1 spans 929-1168 (HVKKPLKTAL…PSYVELQANK (240 aa)). The Ras-associating domain occupies 1171 to 1211 (KPVVLAVTFMDGSVKTLCADSATTAAELCKQLAEKVGLTNS). Residues 1173-1481 (VVLAVTFMDG…MFLEGLKKRS (309 aa)) form the FERM 1 domain. One can recognise an SH3 domain in the interval 1479 to 1547 (KRSRYLVAIK…RAENVYVLPT (69 aa)). Positions 1624–1772 (FSREHIDQPL…PHLVEVEAIQ (149 aa)) constitute a MyTH4 2 domain. One can recognise an FERM 2 domain in the interval 1778 to 2086 (IFHKVFFPDN…SYISLLISNQ (309 aa)).

It belongs to the TRAFAC class myosin-kinesin ATPase superfamily. Myosin family. Interacts with unc-98.

The protein localises to the cytoplasm. Functionally, myosins are actin-based motor molecules with ATPase activity. Unconventional myosins serve in intracellular movements. Their highly divergent tails are presumed to bind to membranous compartments, which would be moved relative to actin filaments. In Caenorhabditis elegans, this protein is Unconventional myosin heavy chain 6.